The chain runs to 464 residues: Rhodopsin (464 aa).

The Extracellular segment spans residues 1 to 33 (MGRDIPDNETWWYNPTMEVHPHWKQFNQVPDAV). N-linked (GlcNAc...) asparagine glycosylation is present at Asn-8. The helical transmembrane segment at 34 to 58 (YYSLGIFIGICGIIGCTGNGIVIYL) threads the bilayer. The Cytoplasmic segment spans residues 59-70 (FTKTKSLQTPAN). A helical membrane pass occupies residues 71 to 97 (MFIINLAFSDFTFSLVNGFPLMTISCF). The Extracellular portion of the chain corresponds to 98–109 (IKKWVFGMAACK). A disulfide bridge connects residues Cys-108 and Cys-186. The chain crosses the membrane as a helical span at residues 110-131 (VYGFIGGIFGLMSIMTMSMISI). Positions 132-134 (DRY) match the 'Ionic lock' involved in activated form stabilization motif. At 132-151 (DRYNVIGRPMAASKKMSHRR) the chain is on the cytoplasmic side. The helical transmembrane segment at 152–172 (AFLMIIFVWMWSTLWSIGPIF) threads the bilayer. Residues 173–199 (GWGAYVLEGVLCNCSFDYITRDSATRS) are Extracellular-facing. A helical membrane pass occupies residues 200 to 224 (NIVCMYIFAFCFPILIIFFCYFNIV). Topologically, residues 225–261 (MAVSNHEKEMAAMAKRLNAKELRKAQAGASAEMKLAK) are cytoplasmic. The helical transmembrane segment at 262-283 (ISIVIVTQFLLSWSPYAVVALL) threads the bilayer. Topologically, residues 284–293 (AQFGPIEWVT) are extracellular. Residues 294 to 315 (PYAAQLPVMFAKASAIHNPLIY) form a helical membrane-spanning segment. The residue at position 305 (Lys-305) is an N6-(retinylidene)lysine. Residues 316–464 (SVSHPKFREA…QGVDNQAYQA (149 aa)) lie on the Cytoplasmic side of the membrane. Residues Cys-336 and Cys-337 are each lipidated (S-palmitoyl cysteine). The tract at residues 344-464 (VEDDKDAETE…QGVDNQAYQA (121 aa)) is disordered. The segment covering 367 to 401 (AAQMKEMMAMMQKMQQQQAAYPPQGAYPPQGGYPP) has biased composition (low complexity). 2 stretches are compositionally biased toward pro residues: residues 416 to 425 (QGYPPPPQGY) and 434 to 452 (QGYP…PQAA).

The protein belongs to the G-protein coupled receptor 1 family. Opsin subfamily. Post-translationally, contains one covalently linked retinal chromophore. Upon light absorption, the covalently bound 11-cis-retinal is converted to all-trans-retinal. After hydrolysis of the Schiff base and release of the covalently bound all-trans-retinal, active rhodopsin is regenerated by binding of a fresh molecule of 11-cis-retinal.

It is found in the cell projection. Its subcellular location is the rhabdomere membrane. Functionally, photoreceptor required for image-forming vision at low light intensity. Light-induced isomerization of 11-cis to all-trans retinal triggers a conformational change that activates signaling via G-proteins. Signaling mediates the activation of phospholipase C. Subsequent receptor phosphorylation mediates displacement of the bound G-protein alpha subunit by arrestin and terminates signaling. The sequence is that of Rhodopsin (RHO) from Sepia officinalis (Common cuttlefish).